Reading from the N-terminus, the 396-residue chain is Elongation factor Tu (396 aa).

Residues Lys-10–Val-206 form the tr-type G domain. The G1 stretch occupies residues Gly-19–Thr-26. GTP is bound at residue Gly-19–Thr-26. Thr-26 contacts Mg(2+). Residues Gly-62–Asn-66 form a G2 region. Residues Asp-83–Gly-86 form a G3 region. Residues Asp-83–His-87 and Asn-138–Asp-141 contribute to the GTP site. Residues Asn-138–Asp-141 form a G4 region. The tract at residues Ser-176–Leu-178 is G5.

This sequence belongs to the TRAFAC class translation factor GTPase superfamily. Classic translation factor GTPase family. EF-Tu/EF-1A subfamily. In terms of assembly, monomer.

It localises to the cytoplasm. It catalyses the reaction GTP + H2O = GDP + phosphate + H(+). Functionally, GTP hydrolase that promotes the GTP-dependent binding of aminoacyl-tRNA to the A-site of ribosomes during protein biosynthesis. This is Elongation factor Tu from Beutenbergia cavernae (strain ATCC BAA-8 / DSM 12333 / CCUG 43141 / JCM 11478 / NBRC 16432 / NCIMB 13614 / HKI 0122).